Reading from the N-terminus, the 277-residue chain is E3 ubiquitin-protein ligase CCNB1IP1 (277 aa).

An RING-type; atypical zinc finger spans residues 4 to 51; it reads CEDMLLCNYRKCRIKLSGYAWVTACSHIFCDQHGSGEFSRSPAICPAC. Positions 127–182 form a coiled coil; sequence QQIQSKDVELTSMKGEVTSMKKVLEEYKKKFSDISEKLMERNRQYQKLQGLYDSLR.

As to quaternary structure, interacts with CCNB1, UBE2L3 and NF2. Ubiquitinated; autoubiquitinated. In terms of processing, phosphorylated by CDK1 on serine or threonine residues (in vitro). Highly expressed in heart. Detected at intermediate levels in liver and kidney, and at low levels in placenta, brain and lung.

Its subcellular location is the nucleus. The protein resides in the chromosome. The enzyme catalyses S-ubiquitinyl-[E2 ubiquitin-conjugating enzyme]-L-cysteine + [acceptor protein]-L-lysine = [E2 ubiquitin-conjugating enzyme]-L-cysteine + N(6)-ubiquitinyl-[acceptor protein]-L-lysine.. It functions in the pathway protein modification; protein ubiquitination. Ubiquitin E3 ligase that acts as a limiting factor for crossing-over during meiosis: required during zygonema to limit the colocalization of RNF212 with MutS-gamma-associated recombination sites and thereby establish early differentiation of crossover and non-crossover sites. Later, it is directed by MutL-gamma to stably accumulate at designated crossover sites. Probably promotes the dissociation of RNF212 and MutS-gamma to allow the progression of recombination and the implementation of the final steps of crossing over. Modulates cyclin-B levels and participates in the regulation of cell cycle progression through the G2 phase. Overexpression causes delayed entry into mitosis. The polypeptide is E3 ubiquitin-protein ligase CCNB1IP1 (CCNB1IP1) (Homo sapiens (Human)).